The primary structure comprises 136 residues: Small ribosomal subunit protein uS9 (136 aa).

It belongs to the universal ribosomal protein uS9 family.

This chain is Small ribosomal subunit protein uS9, found in Borreliella afzelii (strain PKo) (Borrelia afzelii).